A 142-amino-acid polypeptide reads, in one-letter code: MAVQRTFSIIKPDAVAKNVIGKIVSRFETNGLKVVASKMKHLSRQEAEGFYAVHKDRPFFKDLVDFMVSGPVVLQVLEGEDAIAKNRTLMGATDPKKAEPGTIRADFAESIDANAVHGSDAPETAAVEIAYFFPASEVYAGR.

Residues Lys-11, Phe-59, Arg-87, Thr-93, Arg-104, and Asn-114 each contribute to the ATP site. His-117 functions as the Pros-phosphohistidine intermediate in the catalytic mechanism.

Belongs to the NDK family. Homotetramer. It depends on Mg(2+) as a cofactor.

It localises to the cytoplasm. It carries out the reaction a 2'-deoxyribonucleoside 5'-diphosphate + ATP = a 2'-deoxyribonucleoside 5'-triphosphate + ADP. The enzyme catalyses a ribonucleoside 5'-diphosphate + ATP = a ribonucleoside 5'-triphosphate + ADP. Major role in the synthesis of nucleoside triphosphates other than ATP. The ATP gamma phosphate is transferred to the NDP beta phosphate via a ping-pong mechanism, using a phosphorylated active-site intermediate. The sequence is that of Nucleoside diphosphate kinase from Thiobacillus denitrificans (strain ATCC 25259 / T1).